The following is a 294-amino-acid chain: Phosphoribosylaminoimidazole-succinocarboxamide synthase (294 aa).

It belongs to the SAICAR synthetase family.

It carries out the reaction 5-amino-1-(5-phospho-D-ribosyl)imidazole-4-carboxylate + L-aspartate + ATP = (2S)-2-[5-amino-1-(5-phospho-beta-D-ribosyl)imidazole-4-carboxamido]succinate + ADP + phosphate + 2 H(+). It participates in purine metabolism; IMP biosynthesis via de novo pathway; 5-amino-1-(5-phospho-D-ribosyl)imidazole-4-carboxamide from 5-amino-1-(5-phospho-D-ribosyl)imidazole-4-carboxylate: step 1/2. The sequence is that of Phosphoribosylaminoimidazole-succinocarboxamide synthase from Thermoplasma acidophilum (strain ATCC 25905 / DSM 1728 / JCM 9062 / NBRC 15155 / AMRC-C165).